The following is a 630-amino-acid chain: Angiotensin-converting enzyme-related protein (630 aa).

Residues 1 to 22 (MGACNITVLLLVIMLWLPHGLS) form the signal peptide. Residues 28-615 (SASVLEARRF…SRLGVPLGWG (588 aa)) form the Peptidase M2 domain. Disulfide bonds link Cys-142–Cys-150 and Cys-344–Cys-362. His-375 contributes to the Zn(2+) binding site. Glu-376 serves as the catalytic Proton acceptor. Zn(2+) contacts are provided by His-379 and Glu-403. His-505 acts as the Proton donor in catalysis. An intrachain disulfide couples Cys-530 to Cys-548.

The protein belongs to the peptidase M2 family. It depends on Zn(2+) as a cofactor. In terms of processing, glycosylated.

It is found in the secreted. The protein localises to the extracellular space. The enzyme catalyses Release of a C-terminal dipeptide, oligopeptide-|-Xaa-Yaa, when Xaa is not Pro, and Yaa is neither Asp nor Glu. Thus, conversion of angiotensin I to angiotensin II, with increase in vasoconstrictor activity, but no action on angiotensin II.. Its activity is regulated as follows. Inhibited by captopril, lisinopril, trandolaprilat, fosinoprilat and enalaprilat. Its function is as follows. May be involved in the specific maturation or degradation of a number of bioactive peptides. May have a role in the specification of heart progenitors. This chain is Angiotensin-converting enzyme-related protein (Acer), found in Drosophila melanogaster (Fruit fly).